The sequence spans 334 residues: Glycerol-1-phosphate dehydrogenase [NAD(P)+] (334 aa).

NAD(+) contacts are provided by residues glycine 77–aspartate 81 and threonine 99–serine 102. Position 104 (aspartate 104) interacts with substrate. An NAD(+)-binding site is contributed by serine 108. Aspartate 147 contacts substrate. Aspartate 147 and histidine 225 together coordinate Zn(2+). Histidine 229 serves as a coordination point for substrate. Histidine 246 contacts Zn(2+).

It belongs to the glycerol-1-phosphate dehydrogenase family. Requires Zn(2+) as cofactor.

The protein localises to the cytoplasm. The enzyme catalyses sn-glycerol 1-phosphate + NAD(+) = dihydroxyacetone phosphate + NADH + H(+). It carries out the reaction sn-glycerol 1-phosphate + NADP(+) = dihydroxyacetone phosphate + NADPH + H(+). It participates in membrane lipid metabolism; glycerophospholipid metabolism. Its function is as follows. Catalyzes the NAD(P)H-dependent reduction of dihydroxyacetonephosphate (DHAP or glycerone phosphate) to glycerol 1-phosphate (G1P). The G1P thus generated is used as the glycerophosphate backbone of phospholipids in the cellular membranes of Archaea. The polypeptide is Glycerol-1-phosphate dehydrogenase [NAD(P)+] (Methanococcus maripaludis (strain DSM 14266 / JCM 13030 / NBRC 101832 / S2 / LL)).